Here is a 226-residue protein sequence, read N- to C-terminus: Ribose-5-phosphate isomerase A (226 aa).

Residues 33–36 (TGST), 86–89 (DGAD), and 99–102 (KGGG) each bind substrate. Catalysis depends on Glu108, which acts as the Proton acceptor. A substrate-binding site is contributed by Lys126.

This sequence belongs to the ribose 5-phosphate isomerase family. In terms of assembly, homodimer.

The catalysed reaction is aldehydo-D-ribose 5-phosphate = D-ribulose 5-phosphate. It functions in the pathway carbohydrate degradation; pentose phosphate pathway; D-ribose 5-phosphate from D-ribulose 5-phosphate (non-oxidative stage): step 1/1. Catalyzes the reversible conversion of ribose-5-phosphate to ribulose 5-phosphate. The polypeptide is Ribose-5-phosphate isomerase A (Bordetella parapertussis (strain 12822 / ATCC BAA-587 / NCTC 13253)).